The chain runs to 399 residues: Elongation factor Tu (399 aa).

In terms of domain architecture, tr-type G spans 10–209; that stretch reads KPHVNIGTIG…AVDDYIPTPV (200 aa). The tract at residues 19-26 is G1; the sequence is GHVDHGKT. Residue 19–26 coordinates GTP; the sequence is GHVDHGKT. Position 26 (Thr-26) interacts with Mg(2+). Residues 62–66 form a G2 region; sequence GITIN. Residues 83 to 86 form a G3 region; that stretch reads DCPG. Residues 83-87 and 138-141 contribute to the GTP site; these read DCPGH and NKCD. The G4 stretch occupies residues 138–141; it reads NKCD. The G5 stretch occupies residues 175 to 177; it reads SAY.

It belongs to the TRAFAC class translation factor GTPase superfamily. Classic translation factor GTPase family. EF-Tu/EF-1A subfamily. In terms of assembly, monomer.

Its subcellular location is the cytoplasm. It catalyses the reaction GTP + H2O = GDP + phosphate + H(+). GTP hydrolase that promotes the GTP-dependent binding of aminoacyl-tRNA to the A-site of ribosomes during protein biosynthesis. In Bifidobacterium longum (strain DJO10A), this protein is Elongation factor Tu.